A 505-amino-acid polypeptide reads, in one-letter code: ATP synthase subunit alpha (505 aa).

169 to 176 (GDRQTGKT) is a binding site for ATP.

Belongs to the ATPase alpha/beta chains family. F-type ATPases have 2 components, CF(1) - the catalytic core - and CF(0) - the membrane proton channel. CF(1) has five subunits: alpha(3), beta(3), gamma(1), delta(1), epsilon(1). CF(0) has three main subunits: a(1), b(2) and c(9-12). The alpha and beta chains form an alternating ring which encloses part of the gamma chain. CF(1) is attached to CF(0) by a central stalk formed by the gamma and epsilon chains, while a peripheral stalk is formed by the delta and b chains.

The protein resides in the cell membrane. It carries out the reaction ATP + H2O + 4 H(+)(in) = ADP + phosphate + 5 H(+)(out). In terms of biological role, produces ATP from ADP in the presence of a proton gradient across the membrane. The alpha chain is a regulatory subunit. In Alkaliphilus oremlandii (strain OhILAs) (Clostridium oremlandii (strain OhILAs)), this protein is ATP synthase subunit alpha.